The following is an 82-amino-acid chain: RNA-binding protein YbxF (82 aa).

It belongs to the eukaryotic ribosomal protein eL8 family.

The chain is RNA-binding protein YbxF from Geobacillus stearothermophilus (Bacillus stearothermophilus).